Here is a 285-residue protein sequence, read N- to C-terminus: MLPLLAALLAAACPLPPARGGATDAPGLSGTPPNASANASFTGEHSTPRLLASAASAPPERAGPEEAPAAPCNISVQRQMLSSLLVRWGRPRGLQCDLLLFSTNAHGRAFFAAAFHRVGPPLLIEHLGLAAGGAQQDLRLCVGCGWVRGRLRAPAGAPTALPAYPAAEPGPLWLQGEPRHFCCLDFSLEELQGEPGWRLNRKPIESTLVACFMTLVIVVWSVAALIWPVPIIAGFLPNGMEQRRTTAGAPAAAPAAVPAGTTAAAAAAAAAAAAAAAVTSGVAPK.

A signal peptide spans 1–20 (MLPLLAALLAAACPLPPARG). Residues 20–43 (GGATDAPGLSGTPPNASANASFTG) are disordered. A compositionally biased stretch (polar residues) spans 31–43 (TPPNASANASFTG). Residue Asn73 is glycosylated (N-linked (GlcNAc...) asparagine). 2 helical membrane-spanning segments follow: residues 215 to 235 (LVIV…IAGF) and 263 to 283 (AAAA…SGVA).

It belongs to the TMEM158 family. N-glycosylated. In terms of tissue distribution, detected only in the brain.

It localises to the membrane. Receptor for brain injury-derived neurotrophic peptide (BINP), a synthetic 13-mer peptide. This is Transmembrane protein 158 (Tmem158) from Rattus norvegicus (Rat).